Reading from the N-terminus, the 182-residue chain is CDP-diacylglycerol--glycerol-3-phosphate 3-phosphatidyltransferase (182 aa).

At 2-12 the chain is on the cytoplasmic side; it reads QFNIPTLLTLF. A helical membrane pass occupies residues 13–37; it reads RVALIPFFVLAFYLPFVWAPLLCAL. The Periplasmic portion of the chain corresponds to 38–60; sequence IFVFAAVTDWFDGFLARRWKQTT. A helical transmembrane segment spans residues 61–81; sequence RFGAFLDPVADKVMVAVALVL. At 82–86 the chain is on the cytoplasmic side; the sequence is VAEYY. The helical transmembrane segment at 87–107 threads the bilayer; sequence HSWWITLPAATMIAREIIISA. Residues 108-145 are Periplasmic-facing; sequence LREWMAEIGKRSSVAVSWIGKVKTTAQMMALFALLWRP. A helical membrane pass occupies residues 146-168; sequence ERIVEGIGVAALYIAAVLTFWSM. Residues 169 to 181 lie on the Cytoplasmic side of the membrane; that stretch reads FQYLNAARHDLLE.

The protein belongs to the CDP-alcohol phosphatidyltransferase class-I family.

It is found in the cell inner membrane. It carries out the reaction a CDP-1,2-diacyl-sn-glycerol + sn-glycerol 3-phosphate = a 1,2-diacyl-sn-glycero-3-phospho-(1'-sn-glycero-3'-phosphate) + CMP + H(+). The protein operates within phospholipid metabolism; phosphatidylglycerol biosynthesis; phosphatidylglycerol from CDP-diacylglycerol: step 1/2. In terms of biological role, catalyzes the conversion of cytidine diphosphate diacylglycerol (CDP-DG) and glycerol 3-phosphate into phosphatidylglycerol. Essential for the synthesis of anionic phospholipids, thereby playing a role in balancing the ratio of zwitterionic and anionic phospholipids, which is thought to be important for normal membrane function. The chain is CDP-diacylglycerol--glycerol-3-phosphate 3-phosphatidyltransferase from Pectobacterium atrosepticum (strain SCRI 1043 / ATCC BAA-672) (Erwinia carotovora subsp. atroseptica).